The chain runs to 357 residues: Heme A synthase (357 aa).

5 helical membrane-spanning segments follow: residues 24-44 (LVRY…MVGG), 110-130 (MLAR…WVTG), 140-160 (MLGL…MVAS), 175-195 (IHLT…RGLV), and 209-229 (FAGW…LVAG). H272 contacts heme. A run of 3 helical transmembrane segments spans residues 274–294 (MFAY…WKQV), 303–323 (TIVL…TLLM), and 325–345 (VPLH…AFAV). H333 is a heme binding site.

The protein belongs to the COX15/CtaA family. Type 2 subfamily. Interacts with CtaB. Heme b serves as cofactor.

The protein resides in the cell membrane. It catalyses the reaction Fe(II)-heme o + 2 A + H2O = Fe(II)-heme a + 2 AH2. Its pathway is porphyrin-containing compound metabolism; heme A biosynthesis; heme A from heme O: step 1/1. Functionally, catalyzes the conversion of heme O to heme A by two successive hydroxylations of the methyl group at C8. The first hydroxylation forms heme I, the second hydroxylation results in an unstable dihydroxymethyl group, which spontaneously dehydrates, resulting in the formyl group of heme A. This chain is Heme A synthase, found in Brucella anthropi (strain ATCC 49188 / DSM 6882 / CCUG 24695 / JCM 21032 / LMG 3331 / NBRC 15819 / NCTC 12168 / Alc 37) (Ochrobactrum anthropi).